A 209-amino-acid polypeptide reads, in one-letter code: Uracil phosphoribosyltransferase (209 aa).

Residues Arg79, Arg104, and 131–139 (DPMLATGAS) each bind 5-phospho-alpha-D-ribose 1-diphosphate. Uracil contacts are provided by residues Ile194 and 199 to 201 (GDA). Residue Asp200 coordinates 5-phospho-alpha-D-ribose 1-diphosphate.

It belongs to the UPRTase family. Requires Mg(2+) as cofactor.

It carries out the reaction UMP + diphosphate = 5-phospho-alpha-D-ribose 1-diphosphate + uracil. It participates in pyrimidine metabolism; UMP biosynthesis via salvage pathway; UMP from uracil: step 1/1. With respect to regulation, allosterically activated by GTP. Catalyzes the conversion of uracil and 5-phospho-alpha-D-ribose 1-diphosphate (PRPP) to UMP and diphosphate. The sequence is that of Uracil phosphoribosyltransferase from Staphylococcus saprophyticus subsp. saprophyticus (strain ATCC 15305 / DSM 20229 / NCIMB 8711 / NCTC 7292 / S-41).